Consider the following 395-residue polypeptide: ATP phosphoribosyltransferase regulatory subunit (395 aa).

It belongs to the class-II aminoacyl-tRNA synthetase family. HisZ subfamily. As to quaternary structure, heteromultimer composed of HisG and HisZ subunits.

The protein resides in the cytoplasm. It functions in the pathway amino-acid biosynthesis; L-histidine biosynthesis; L-histidine from 5-phospho-alpha-D-ribose 1-diphosphate: step 1/9. Its function is as follows. Required for the first step of histidine biosynthesis. May allow the feedback regulation of ATP phosphoribosyltransferase activity by histidine. In Pseudomonas fluorescens (strain Pf0-1), this protein is ATP phosphoribosyltransferase regulatory subunit.